The sequence spans 240 residues: Probable transcriptional regulatory protein jhp_0149 (240 aa).

The protein belongs to the TACO1 family.

Its subcellular location is the cytoplasm. The chain is Probable transcriptional regulatory protein jhp_0149 from Helicobacter pylori (strain J99 / ATCC 700824) (Campylobacter pylori J99).